A 136-amino-acid chain; its full sequence is Ribonuclease VapC47 (136 aa).

One can recognise a PINc domain in the interval 2–104 (IYMDTSALTK…AIHLAAAAQI (103 aa)). The Mg(2+) site is built by D5 and D94.

It belongs to the PINc/VapC protein family. It depends on Mg(2+) as a cofactor.

Toxic component of a type II toxin-antitoxin (TA) system. An RNase. Its toxic effect on colony formation is neutralized by coexpression with cognate antitoxin VapB47. This Mycobacterium tuberculosis (strain CDC 1551 / Oshkosh) protein is Ribonuclease VapC47.